Consider the following 449-residue polypeptide: MGKEKQHVSIVVIGHVDSGKSTTTGHLIYKCGGIDKRAIEKFEKEAAEMGKGSFKYAWVLDKLKAERERGITIDIALWKFETDKYNFTIIDAPGHRDFIKNMITGTSQADLAILVIASPPGEFEAGISQNGQTREHALLAYTLGVKQMIVACNKMDDKNVNWSKERYEEVSKEMDLYLKKVGYNPPKVPKVPTSGWTGENLFERTGGDHALGKWYKGPCLLEALDACDPPKRPVDKPLRLPLQDVYKIGGIGTVPVGRVETGVIKPGMVVTFAPSGLSTEVKSVEMHHEALTQAGPGDNVGFNVKNVSVKDLKRGYVCGDSKNDPPKGCASFNAQVIILNHPGEIHAGYAPVLDCHTAHIACKFSELILKMDRRSGKKLEDSPKMIKSGDAAMVKMVASKPMCVEAFTSYPPLGRFAVRDMRQTVAVGVIKSVEKKEVEGKMTKSAAKK.

The tr-type G domain maps to 5–234; sequence KQHVSIVVIG…DACDPPKRPV (230 aa). Positions 14-21 are G1; it reads GHVDSGKS. A GTP-binding site is contributed by 14–21; sequence GHVDSGKS. Lysine 55 bears the N6,N6-dimethyllysine mark. The segment at 70 to 74 is G2; sequence GITID. Lysine 79 is subject to N6,N6,N6-trimethyllysine. A G3 region spans residues 91–94; the sequence is DAPG. Residues 91 to 95 and 153 to 156 contribute to the GTP site; these read DAPGH and NKMD. The G4 stretch occupies residues 153–156; sequence NKMD. An N6,N6,N6-trimethyllysine modification is found at lysine 187. The interval 194 to 196 is G5; the sequence is SGW. Lysine 265 bears the N6-methyllysine mark. N6,N6,N6-trimethyllysine is present on residues lysine 310 and lysine 400.

This sequence belongs to the TRAFAC class translation factor GTPase superfamily. Classic translation factor GTPase family. EF-Tu/EF-1A subfamily.

It is found in the cytoplasm. Its function is as follows. This protein promotes the GTP-dependent binding of aminoacyl-tRNA to the A-site of ribosomes during protein biosynthesis. This Porphyra purpurea (Red seaweed) protein is Elongation factor 1-alpha C (TEF-C).